The primary structure comprises 72 residues: Prokaryotic ubiquitin-like protein Pup (72 aa).

Residues 1 to 10 (MATRDSGGGQ) show a composition bias toward gly residues. The tract at residues 1-41 (MATRDSGGGQQRADRRAEEIDDVATEDTSASDLKERHEKLS) is disordered. A coiled-coil region spans residues 27–61 (DTSASDLKERHEKLSEDVDSLLDEIDDVLEENAEE). Positions 28-66 (TSASDLKERHEKLSEDVDSLLDEIDDVLEENAEEFVKGY) are ARC ATPase binding. Basic and acidic residues predominate over residues 32–41 (DLKERHEKLS). Deamidated glutamine is present on Q72. Residue Q72 forms an Isoglutamyl lysine isopeptide (Gln-Lys) (interchain with K-? in acceptor proteins) linkage.

Belongs to the prokaryotic ubiquitin-like protein family. As to quaternary structure, strongly interacts with the proteasome-associated ATPase ARC through a hydrophobic interface; the interacting region of Pup lies in its C-terminal half. There is one Pup binding site per ARC hexamer ring. Post-translationally, is modified by deamidation of its C-terminal glutamine to glutamate by the deamidase Dop, a prerequisite to the subsequent pupylation process.

It functions in the pathway protein degradation; proteasomal Pup-dependent pathway. Protein modifier that is covalently attached to lysine residues of substrate proteins, thereby targeting them for proteasomal degradation. The tagging system is termed pupylation. The protein is Prokaryotic ubiquitin-like protein Pup of Frankia casuarinae (strain DSM 45818 / CECT 9043 / HFP020203 / CcI3).